The primary structure comprises 478 residues: Succinyl-CoA:acetate/propanoyl-CoA:succinate CoA transferase (478 aa).

A mitochondrion-targeting transit peptide spans 1–30 (MYQLAFLRCRYASPIVREARRAFHASRKCQ). Residue 256–260 (GIGAI) coordinates CoA. The 5-glutamyl coenzyme A thioester intermediate role is filled by Glu279. Residues Ile354, Gly377, and Lys404 each contribute to the CoA site.

The protein belongs to the acetyl-CoA hydrolase/transferase family.

The protein resides in the mitochondrion. The catalysed reaction is succinyl-CoA + acetate = succinate + acetyl-CoA. It catalyses the reaction propanoyl-CoA + succinate = propanoate + succinyl-CoA. In terms of biological role, transferase involved in anaerobic fumarate-respiration in the mitochondria. Catalyzes the transfer of the CoA moiety of acetyl-CoA or propionyl-CoA to succinate, thereby forming acetate and propionate, respectively. Acetate and propionate are the two major metabolic end products in the anaerobic mitochondrial metabolism of F.hepatica. Also displays CoA transferase activities from acetyl-CoA to propionate, acetate and butyrate. The protein is Succinyl-CoA:acetate/propanoyl-CoA:succinate CoA transferase of Fasciola hepatica (Liver fluke).